A 45-amino-acid polypeptide reads, in one-letter code: Myotoxin-2 (45 aa).

Intrachain disulfides connect Cys4-Cys36, Cys11-Cys30, and Cys18-Cys37.

The protein belongs to the crotamine-myotoxin family. As to quaternary structure, monomer. As to expression, expressed by the venom gland.

It localises to the secreted. Its function is as follows. Cationic peptide that possesses multiple functions. It acts as a cell-penetrating peptide (CPP), and as a potent voltage-gated potassium channel (Kv) inhibitor. It exhibits antimicrobial activities, hind limb paralysis, and severe muscle necrosis by a non-enzymatic mechanism. This chain is Myotoxin-2, found in Crotalus viridis viridis (Prairie rattlesnake).